A 382-amino-acid polypeptide reads, in one-letter code: Carbamoyl phosphate synthase small chain (382 aa).

The segment at 1–189 is CPSase; the sequence is MIKSALLVLE…GLPEAKSEDD (189 aa). The L-glutamine site is built by serine 47, glycine 241, and glycine 243. Residues 193–380 enclose the Glutamine amidotransferase type-1 domain; it reads HVVAYDFGAK…IELIEQYRQS (188 aa). Cysteine 269 serves as the catalytic Nucleophile. Positions 270, 273, 311, 313, and 314 each coordinate L-glutamine. Residues histidine 353 and glutamate 355 contribute to the active site.

This sequence belongs to the CarA family. Composed of two chains; the small (or glutamine) chain promotes the hydrolysis of glutamine to ammonia, which is used by the large (or ammonia) chain to synthesize carbamoyl phosphate. Tetramer of heterodimers (alpha,beta)4.

It carries out the reaction hydrogencarbonate + L-glutamine + 2 ATP + H2O = carbamoyl phosphate + L-glutamate + 2 ADP + phosphate + 2 H(+). The catalysed reaction is L-glutamine + H2O = L-glutamate + NH4(+). Its pathway is amino-acid biosynthesis; L-arginine biosynthesis; carbamoyl phosphate from bicarbonate: step 1/1. It functions in the pathway pyrimidine metabolism; UMP biosynthesis via de novo pathway; (S)-dihydroorotate from bicarbonate: step 1/3. Its function is as follows. Small subunit of the glutamine-dependent carbamoyl phosphate synthetase (CPSase). CPSase catalyzes the formation of carbamoyl phosphate from the ammonia moiety of glutamine, carbonate, and phosphate donated by ATP, constituting the first step of 2 biosynthetic pathways, one leading to arginine and/or urea and the other to pyrimidine nucleotides. The small subunit (glutamine amidotransferase) binds and cleaves glutamine to supply the large subunit with the substrate ammonia. This is Carbamoyl phosphate synthase small chain from Salmonella typhimurium (strain LT2 / SGSC1412 / ATCC 700720).